A 359-amino-acid chain; its full sequence is Alanine racemase (359 aa).

The active-site Proton acceptor; specific for D-alanine is lysine 35. The residue at position 35 (lysine 35) is an N6-(pyridoxal phosphate)lysine. Position 130 (arginine 130) interacts with substrate. Tyrosine 255 functions as the Proton acceptor; specific for L-alanine in the catalytic mechanism. Methionine 303 contacts substrate.

The protein belongs to the alanine racemase family. Pyridoxal 5'-phosphate is required as a cofactor.

It carries out the reaction L-alanine = D-alanine. Its pathway is amino-acid biosynthesis; D-alanine biosynthesis; D-alanine from L-alanine: step 1/1. In terms of biological role, catalyzes the interconversion of L-alanine and D-alanine. May also act on other amino acids. The sequence is that of Alanine racemase (alr) from Janthinobacterium sp. (strain Marseille) (Minibacterium massiliensis).